We begin with the raw amino-acid sequence, 169 residues long: Protein pid-1 (169 aa).

Polar residues predominate over residues 137 to 151; the sequence is SGSPRITPQKHTPVS. The interval 137-169 is disordered; the sequence is SGSPRITPQKHTPVSANHKPARSIFDDIPSNIA.

As to quaternary structure, component of the pid-1 variant of the PETISCO complex (also called the pid-3, erh-2, tofu-6, and ife-3 small RNA complex) containing at least pid-1, tofu-6, ife-3, pid-3, and erh-2, which is required for the biogenesis of a class of 21 nucleotide PIWI-interacting RNAs (piRNAs) that possess a uracil residue at the 5'-end (also called 21U-RNAs). Within the complex interacts with pid-3; the interaction is direct. Within the complex interacts with erh-2. Within the complex interacts with tofu-6. Expressed predominantly in the germline (at protein level).

It is found in the cytoplasm. The protein resides in the nucleus. The protein localises to the perinuclear region. In terms of biological role, component of the pid-1 variant of the PETISCO complex which is required for the biogenesis of a class of 21 nucleotide PIWI-interacting RNAs (piRNAs) that possess a uracil residue at the 5'-end (also called 21U-RNAs). Within the complex acts as an adapter which binds to the complex via erh-2. Involved in the biogenesis of 21U-RNAs which guide the piwi protein prg-1 to its DNA targets for silencing. Plays a role in small RNA-directed transgenerational epigenetic inheritance. In Caenorhabditis elegans, this protein is Protein pid-1.